We begin with the raw amino-acid sequence, 281 residues long: Putrescine transport system permease protein PotI (281 aa).

Residues 1-13 (MNNLPVVRSPWRI) are Cytoplasmic-facing. The helical transmembrane segment at 14–33 (VILLLGFTFLYAPMLMLVIY) threads the bilayer. Topologically, residues 34-68 (SFNSSKLVTVWAGWSTRWYGELLRDDAMMSAVGLS) are periplasmic. An ABC transmembrane type-1 domain is found at 65–260 (VGLSLTIAAC…GAVGIVGFIA (196 aa)). A helical transmembrane segment spans residues 69 to 88 (LTIAACAATAAAILGTIAAV). Topologically, residues 89 to 115 (VLVRFGRFRGSNGFAFMITAPLVMPDV) are cytoplasmic. Residues 116–135 (ITGLSLLLLFVALAHAIGWP) traverse the membrane as a helical segment. Topologically, residues 136–140 (ADRGM) are periplasmic. A helical membrane pass occupies residues 141–160 (LTIWLAHVTFCTAYVAVVIS). Residues 161-186 (SRLRELDRSIEEAAMDLGATPLKVFF) are Cytoplasmic-facing. A helical membrane pass occupies residues 187-206 (VITLPMIMPAIISGWLLAFT). The Periplasmic segment spans residues 207–243 (LSLDDLVIASFVSGPGATTLPMLVFSSVRMGVNPEIN). Residues 244-263 (ALATLILGAVGIVGFIAWYL) traverse the membrane as a helical segment. Residues 264-281 (MARAEKQRIRDIQRARRG) lie on the Cytoplasmic side of the membrane.

The protein belongs to the binding-protein-dependent transport system permease family. CysTW subfamily. As to quaternary structure, the complex is composed of two ATP-binding proteins (PotG), two transmembrane proteins (PotH and PotI) and a solute-binding protein (PotF).

The protein resides in the cell inner membrane. In terms of biological role, part of the ABC transporter complex PotFGHI involved in putrescine uptake. Responsible for the translocation of the substrate across the membrane. The polypeptide is Putrescine transport system permease protein PotI (Escherichia coli O6:H1 (strain CFT073 / ATCC 700928 / UPEC)).